A 109-amino-acid chain; its full sequence is Sperm-specific class P protein 10 (109 aa).

The region spanning 2-109 (SLTADPPACT…TVTIPMSATA (108 aa)) is the MSP domain.

In terms of tissue distribution, expressed at higher level in testis.

This is Sperm-specific class P protein 10 (ssp-10) from Caenorhabditis elegans.